The chain runs to 237 residues: 1-(5-phosphoribosyl)-5-[(5-phosphoribosylamino)methylideneamino] imidazole-4-carboxamide isomerase (237 aa).

The active-site Proton acceptor is D8. D129 serves as the catalytic Proton donor.

Belongs to the HisA/HisF family.

It is found in the cytoplasm. The enzyme catalyses 1-(5-phospho-beta-D-ribosyl)-5-[(5-phospho-beta-D-ribosylamino)methylideneamino]imidazole-4-carboxamide = 5-[(5-phospho-1-deoxy-D-ribulos-1-ylimino)methylamino]-1-(5-phospho-beta-D-ribosyl)imidazole-4-carboxamide. The protein operates within amino-acid biosynthesis; L-histidine biosynthesis; L-histidine from 5-phospho-alpha-D-ribose 1-diphosphate: step 4/9. The sequence is that of 1-(5-phosphoribosyl)-5-[(5-phosphoribosylamino)methylideneamino] imidazole-4-carboxamide isomerase from Methanosphaera stadtmanae (strain ATCC 43021 / DSM 3091 / JCM 11832 / MCB-3).